A 115-amino-acid polypeptide reads, in one-letter code: Delta-hexatoxin-Hi1a (115 aa).

Residues 1 to 18 (MKVIATLYGLLFLTVVLG) form the signal peptide. Positions 19-73 (DITEGNENDLVENFREELSEADIPLLKKLEAIEDALLEKDFLPYEEEDRNARPKR) are excised as a propeptide. Disulfide bonds link Cys-74–Cys-88, Cys-81–Cys-93, Cys-87–Cys-104, and Cys-89–Cys-115.

The protein belongs to the neurotoxin 06 (delta-actx) family. Expressed by the venom gland.

Its subcellular location is the secreted. Functionally, neurotoxin that slows inactivation of voltage-gated sodium channels (Nav). In vivo, is lethal to both vertebrates and insects. This chain is Delta-hexatoxin-Hi1a, found in Hadronyche infensa (Fraser island funnel-web spider).